The following is a 142-amino-acid chain: Large ribosomal subunit protein uL13 (142 aa).

This sequence belongs to the universal ribosomal protein uL13 family. In terms of assembly, part of the 50S ribosomal subunit.

Functionally, this protein is one of the early assembly proteins of the 50S ribosomal subunit, although it is not seen to bind rRNA by itself. It is important during the early stages of 50S assembly. The protein is Large ribosomal subunit protein uL13 of Shewanella baltica (strain OS223).